The sequence spans 473 residues: Glutamate--tRNA ligase (473 aa).

Residues 13 to 23 (PSPTGFLHVGG) carry the 'HIGH' region motif. Positions 240 to 244 (KLSKR) match the 'KMSKS' region motif. K243 is an ATP binding site.

The protein belongs to the class-I aminoacyl-tRNA synthetase family. Glutamate--tRNA ligase type 1 subfamily. As to quaternary structure, monomer.

It localises to the cytoplasm. The enzyme catalyses tRNA(Glu) + L-glutamate + ATP = L-glutamyl-tRNA(Glu) + AMP + diphosphate. In terms of biological role, catalyzes the attachment of glutamate to tRNA(Glu) in a two-step reaction: glutamate is first activated by ATP to form Glu-AMP and then transferred to the acceptor end of tRNA(Glu). In Shewanella denitrificans (strain OS217 / ATCC BAA-1090 / DSM 15013), this protein is Glutamate--tRNA ligase.